An 811-amino-acid polypeptide reads, in one-letter code: Potassium transporter 7 (811 aa).

At methionine 1–serine 52 the chain is on the cytoplasmic side. The chain crosses the membrane as a helical span at residues leucine 53–valine 73. The Extracellular segment spans residues tyrosine 74–glycine 93. The chain crosses the membrane as a helical span at residues leucine 94 to valine 114. Topologically, residues leucine 115–leucine 181 are cytoplasmic. A helical membrane pass occupies residues leucine 182–isoleucine 202. At serine 203 to glycine 217 the chain is on the extracellular side. A helical membrane pass occupies residues glycine 218 to leucine 238. At glutamine 239–arginine 245 the chain is on the cytoplasmic side. A helical membrane pass occupies residues valine 246–leucine 266. Over tyrosine 267–glycine 296 the chain is Extracellular. The helical transmembrane segment at tryptophan 297–leucine 317 threads the bilayer. Topologically, residues glycine 318 to arginine 326 are cytoplasmic. The helical transmembrane segment at leucine 327–phenylalanine 347 threads the bilayer. Residues leucine 348 to serine 366 are Extracellular-facing. Residue asparagine 351 is glycosylated (N-linked (GlcNAc...) asparagine). Residues leucine 367–isoleucine 387 traverse the membrane as a helical segment. Residues serine 388–glutamine 418 are Cytoplasmic-facing. A helical membrane pass occupies residues isoleucine 419–phenylalanine 439. The Extracellular portion of the chain corresponds to arginine 440 to glycine 450. Residues leucine 451 to valine 471 form a helical membrane-spanning segment. At tryptophan 472–asparagine 475 the chain is on the cytoplasmic side. Residues isoleucine 476–alanine 496 form a helical membrane-spanning segment. Topologically, residues alanine 497 to glutamine 503 are extracellular. The helical transmembrane segment at glycine 504–tyrosine 524 threads the bilayer. Over glycine 525–valine 811 the chain is Cytoplasmic. The disordered stretch occupies residues threonine 680 to serine 702.

Belongs to the HAK/KUP transporter (TC 2.A.72.3) family. In terms of tissue distribution, expressed in roots and shoots.

It localises to the membrane. Functionally, high-affinity potassium transporter. This chain is Potassium transporter 7 (HAK7), found in Oryza sativa subsp. japonica (Rice).